The following is a 271-amino-acid chain: RxLR effector protein PITG_15679 (271 aa).

The signal sequence occupies residues 1–18 (MKVLQLIALTALVSSCVA). Residues 49–69 (RSLRRYDLEGLDSVNSNREER) carry the RxLR-dEER motif. Residues 212–271 (RLLSANVVMRLNDKGEKQILLISSSNPKKGDFLLPKGGWDKGEDVKKAALREVIEEGGVR) form the Nudix hydrolase domain. The short motif at 248-269 (GGWDKGEDVKKAALREVIEEGG) is the Nudix box element.

In the N-terminal section; belongs to the RxLR effector family. The protein in the C-terminal section; belongs to the Nudix hydrolase family.

It localises to the secreted. It is found in the host cytoplasm. The protein localises to the host nucleus. Effector that enhances P.infestans colonization of Nicotiana benthamiana leaves. The polypeptide is RxLR effector protein PITG_15679 (Phytophthora infestans (strain T30-4) (Potato late blight agent)).